Reading from the N-terminus, the 106-residue chain is Small ribosomal subunit protein uS10 (106 aa).

Belongs to the universal ribosomal protein uS10 family. In terms of assembly, part of the 30S ribosomal subunit.

Functionally, involved in the binding of tRNA to the ribosomes. The protein is Small ribosomal subunit protein uS10 of Prochlorococcus marinus subsp. pastoris (strain CCMP1986 / NIES-2087 / MED4).